Here is a 287-residue protein sequence, read N- to C-terminus: 4,4'-diapophytoene synthase (287 aa).

Residues 18–21 (HSKS), Y41, and R45 each bind (2E,6E)-farnesyl diphosphate. Residues D48 and D52 each contribute to the Mg(2+) site. Q165 contributes to the (2E,6E)-farnesyl diphosphate binding site. A Mg(2+)-binding site is contributed by N168. R171 lines the (2E,6E)-farnesyl diphosphate pocket. Residue D172 participates in Mg(2+) binding. Y248 is a binding site for (2E,6E)-farnesyl diphosphate.

Belongs to the phytoene/squalene synthase family. CrtM subfamily. It depends on Mg(2+) as a cofactor.

The catalysed reaction is 2 (2E,6E)-farnesyl diphosphate = 15-cis-4,4'-diapophytoene + 2 diphosphate. Its pathway is carotenoid biosynthesis; staphyloxanthin biosynthesis; staphyloxanthin from farnesyl diphosphate: step 1/5. In terms of biological role, involved in the biosynthesis of the yellow-orange carotenoid staphyloxanthin, which plays a role in the virulence via its protective function against oxidative stress. Catalyzes the head-to-head condensation of two molecules of farnesyl diphosphate (FPP) into the colorless C(30) carotenoid 4,4'-diapophytoene (dehydrosqualene). In Staphylococcus aureus, this protein is 4,4'-diapophytoene synthase.